A 404-amino-acid chain; its full sequence is Argininosuccinate synthase (404 aa).

Residues 10–18 (AYSGGLDTS) and Ala-37 each bind ATP. Residues Tyr-88 and Ser-93 each contribute to the L-citrulline site. Residue Gly-118 participates in ATP binding. L-aspartate is bound by residues Thr-120, Asn-124, and Asp-125. L-citrulline is bound at residue Asn-124. Arg-128, Ser-178, Ser-187, Glu-263, and Tyr-275 together coordinate L-citrulline.

The protein belongs to the argininosuccinate synthase family. Type 1 subfamily. In terms of assembly, homotetramer.

It localises to the cytoplasm. It carries out the reaction L-citrulline + L-aspartate + ATP = 2-(N(omega)-L-arginino)succinate + AMP + diphosphate + H(+). Its pathway is amino-acid biosynthesis; L-arginine biosynthesis; L-arginine from L-ornithine and carbamoyl phosphate: step 2/3. The polypeptide is Argininosuccinate synthase (Hahella chejuensis (strain KCTC 2396)).